The chain runs to 151 residues: FAD synthase (151 aa).

ATP contacts are provided by residues 21 to 22 (TF), 26 to 29 (HPGH), and D104.

This sequence belongs to the archaeal FAD synthase family. Homodimer. Requires a divalent metal cation as cofactor.

It carries out the reaction FMN + ATP + H(+) = FAD + diphosphate. Its pathway is cofactor biosynthesis; FAD biosynthesis; FAD from FMN: step 1/1. In terms of biological role, catalyzes the transfer of the AMP portion of ATP to flavin mononucleotide (FMN) to produce flavin adenine dinucleotide (FAD) coenzyme. The sequence is that of FAD synthase from Methanosarcina mazei (strain ATCC BAA-159 / DSM 3647 / Goe1 / Go1 / JCM 11833 / OCM 88) (Methanosarcina frisia).